The sequence spans 274 residues: NAD(P)H dehydrogenase [quinone] 1 (274 aa).

At A2 the chain carries N-acetylalanine. FAD-binding positions include H12, 18 to 19 (FN), and Q67. S82 carries the post-translational modification Phosphoserine. 104–107 (LYWF) lines the FAD pocket. Residue 126–128 (AYT) coordinates substrate. Residues 148–151 (TTGG), Y156, and R201 contribute to the FAD site. Positions 225–274 (PSSLFDLNFQAGFLLKKEVQEEQKKNKFGLSVGHHLGKSIPADNQIKARK) are important for apoenzyme conformational stability. Residue K251 forms a Glycyl lysine isopeptide (Lys-Gly) (interchain with G-Cter in SUMO2) linkage.

This sequence belongs to the NAD(P)H dehydrogenase (quinone) family. In terms of assembly, homodimer. Interacts with PDLIM4 isoform 2; this interaction stabilizes PDLIM4 isoform 2 in response to oxidative stress and protects it from ubiquitin-independent degradation by the core 20S proteasome. Interacts with TP73 (via SAM domain); this interaction is NADH-dependent, stabilizes TP73 in response to oxidative stress and protects it from ubiquitin-independent degradation by the 20S proteasome. Interacts with TP53; this interaction is NADH-dependent, stabilizes TP53 in response to oxidative stress and protects it from ubiquitin-independent degradation by the 20S proteasome. The cofactor is FAD.

It localises to the cytoplasm. The protein resides in the cytosol. The enzyme catalyses a quinone + NADH + H(+) = a quinol + NAD(+). The catalysed reaction is a quinone + NADPH + H(+) = a quinol + NADP(+). It carries out the reaction ubiquinone-10 + NADH + H(+) = ubiquinol-10 + NAD(+). It catalyses the reaction menadione + NADH + H(+) = menadiol + NAD(+). In terms of biological role, flavin-containing quinone reductase that catalyzes two-electron reduction of quinones to hydroquinones using either NADH or NADPH as electron donors. In a ping-pong kinetic mechanism, the electrons are sequentially transferred from NAD(P)H to flavin cofactor and then from reduced flavin to the quinone, bypassing the formation of semiquinone and reactive oxygen species. Regulates cellular redox state primarily through quinone detoxification. Reduces components of plasma membrane redox system such as coenzyme Q and vitamin quinones, producing antioxidant hydroquinone forms. In the process may function as superoxide scavenger to prevent hydroquinone oxidation and facilitate excretion. Alternatively, can activate quinones and their derivatives by generating redox reactive hydroquinones with DNA cross-linking antitumor potential. Acts as a gatekeeper of the core 20S proteasome known to degrade proteins with unstructured regions. Upon oxidative stress, interacts with tumor suppressors TP53 and TP73 in a NADH-dependent way and inhibits their ubiquitin-independent degradation by the 20S proteasome. The sequence is that of NAD(P)H dehydrogenase [quinone] 1 (Nqo1) from Rattus norvegicus (Rat).